The chain runs to 184 residues: ATP synthase subunit b, chloroplastic (184 aa).

A helical membrane pass occupies residues 27–49; sequence LATNPINLSVVLGVLIFFGKGVL.

The protein belongs to the ATPase B chain family. As to quaternary structure, F-type ATPases have 2 components, F(1) - the catalytic core - and F(0) - the membrane proton channel. F(1) has five subunits: alpha(3), beta(3), gamma(1), delta(1), epsilon(1). F(0) has four main subunits: a(1), b(1), b'(1) and c(10-14). The alpha and beta chains form an alternating ring which encloses part of the gamma chain. F(1) is attached to F(0) by a central stalk formed by the gamma and epsilon chains, while a peripheral stalk is formed by the delta, b and b' chains.

The protein resides in the plastid. It localises to the chloroplast thylakoid membrane. F(1)F(0) ATP synthase produces ATP from ADP in the presence of a proton or sodium gradient. F-type ATPases consist of two structural domains, F(1) containing the extramembraneous catalytic core and F(0) containing the membrane proton channel, linked together by a central stalk and a peripheral stalk. During catalysis, ATP synthesis in the catalytic domain of F(1) is coupled via a rotary mechanism of the central stalk subunits to proton translocation. Functionally, component of the F(0) channel, it forms part of the peripheral stalk, linking F(1) to F(0). The sequence is that of ATP synthase subunit b, chloroplastic from Piper cenocladum (Ant piper).